The primary structure comprises 284 residues: Trimeric intracellular cation channel type B-A (284 aa).

At 1–15 the chain is on the lumenal side; sequence MESLSELSVQFSQLS. The chain crosses the membrane as a helical span at residues 16–33; it reads MFPFFDMAHYVVSVMSAR. Over 34-46 the chain is Cytoplasmic; it reads EQAGALDIAARSP. The helical transmembrane segment at 47-68 threads the bilayer; that stretch reads MASWFSAMLYCFGGGILSSILL. Residues 69 to 79 lie on the Lumenal side of the membrane; that stretch reads AEPPIAVLSNT. The helical transmembrane segment at 80-99 threads the bilayer; it reads TNIMLASTIWYMVYYFPYDL. Topologically, residues 100–102 are cytoplasmic; that stretch reads FYN. Residues 103-121 traverse the membrane as a helical segment; it reads CFFFLPIRLIIAGMKEVTR. The a 1,2-diacyl-sn-glycero-3-phospho-(1D-myo-inositol-4,5-bisphosphate) site is built by lysine 117 and arginine 121. The Lumenal segment spans residues 122–137; that stretch reads TWKILSGVTHAHSHYK. A helical membrane pass occupies residues 138–155; that stretch reads DALLVMITIGWARGAGGG. The Cytoplasmic portion of the chain corresponds to 156 to 177; that stretch reads LISNFEQLVRGVWKPESNEFLK. A helical membrane pass occupies residues 178 to 195; that stretch reads MSYPVKVTLIGAVLFTLQ. Residues 196 to 206 are Lumenal-facing; that stretch reads HGHYLPISRHN. A helical membrane pass occupies residues 207-224; sequence LMLIYTMFLVLIKVTMML. Over 225–284 the chain is Cytoplasmic; that stretch reads THSTASPFLPLETPLQRILFGQRQKPSEVRQSASSSGAKGKPSKKTLDKDSGEQSKKKDS. Residues 246-284 form a disordered region; it reads QRQKPSEVRQSASSSGAKGKPSKKTLDKDSGEQSKKKDS. The span at 269 to 284 shows a compositional bias: basic and acidic residues; sequence KTLDKDSGEQSKKKDS.

This sequence belongs to the TMEM38 family. As to quaternary structure, homotrimer; conformation seems to be controled by binding to diacylglycerol (DAG).

Its subcellular location is the endoplasmic reticulum membrane. The enzyme catalyses K(+)(in) = K(+)(out). Channel activity is activated by increased cytosolic Ca(2+) levels and blocked by luminal high Ca(2+) levels. In terms of biological role, intracellular monovalent cation channel required for maintenance of rapid intracellular calcium release. Acts as a potassium counter-ion channel that functions in synchronization with calcium release from intracellular stores. Activated by increased cytosolic Ca(2+) levels. The protein is Trimeric intracellular cation channel type B-A (tmem38b-a) of Xenopus laevis (African clawed frog).